The sequence spans 194 residues: Rho-related protein racC (194 aa).

GTP is bound by residues alanine 17, glycine 19, lysine 20, threonine 21, cysteine 22, glutamate 34, tyrosine 36, threonine 39, glycine 64, lysine 120, aspartate 122, alanine 163, and lysine 164. Threonine 21 provides a ligand contact to Mg(2+). Short sequence motifs (switch) lie at residues 30–41 and 61–79; these read RKFPEDYIPTVF and DTAG…YSSA. Threonine 39 contacts Mg(2+). Cysteine 191 is subject to Cysteine methyl ester. Cysteine 191 is lipidated: S-geranylgeranyl cysteine. Positions 192–194 are cleaved as a propeptide — removed in mature form; the sequence is ALL.

Belongs to the small GTPase superfamily. Rho family. As to quaternary structure, interacts (GTP-bound form) with PAK4 (via CRIB domain). Interacts (GTP-bound form) with PAK5 (via CRIB domain). The cofactor is Mg(2+).

It is found in the cell membrane. It localises to the cytoplasm. The protein resides in the cytoskeleton. It carries out the reaction GTP + H2O = GDP + phosphate + H(+). Its activity is regulated as follows. Regulated by guanine nucleotide exchange factors (GEFs) which promote the exchange of bound GDP for free GTP, GTPase activating proteins (GAPs) which increase the GTP hydrolysis activity, and GDP dissociation inhibitors which inhibit the dissociation of the nucleotide from the GTPase. Small GTPase which cycles between active GTP-bound and inactive GDP-bound states. The protein is Rho-related protein racC of Entamoeba histolytica (strain ATCC 30459 / HM-1:IMSS / ABRM).